The primary structure comprises 197 residues: Guanylate kinase (197 aa).

One can recognise a Guanylate kinase-like domain in the interval 10 to 187 (GSLFIVSAPA…AYQVLRSILI (178 aa)). 17-24 (APAGTGKT) contacts ATP.

Belongs to the guanylate kinase family.

The protein localises to the cytoplasm. It catalyses the reaction GMP + ATP = GDP + ADP. In terms of biological role, essential for recycling GMP and indirectly, cGMP. In Protochlamydia amoebophila (strain UWE25), this protein is Guanylate kinase.